The primary structure comprises 445 residues: MIRLETRFASSFIQSSKLEPFLEKSESARLTLHSSQGQGKEYLGWLYLPKELKNSEIERMTQVAERLRNSSEVIVVIGIGGSYLGSRAVLEATLPFFKKPSIGNPEIIFAGHHLESRYFSELIEYLEDKNFSINVISKSGTTTEPAIAFRLLWELLRKKYGSSASSRVVATTDSSKGVLKKFADSEKLDTFTIPDNVGGRYSVLTPVGLFPLAVAGISISKFILGFQNILNDIHSITDPTRNPATYYSALRNYFLSEGRYIEVLANFNPSLRYVSEWWKQLFGESEGKENKGIFPASMDFTTDLHSLGQYIQEGKRILFETVLSPSEVCSNLTLKPTQDNLDSLNFLSGNTLGYVNEQARLGTLLAHADGGVPCLELVFPDISPQSLGELMYFFEYSCAISGYSLGVNPFDQPGVEAYKKNMFALLNKPGFEQEGETLRKRISRN.

The active-site Proton donor is E284. Catalysis depends on residues H305 and K419.

This sequence belongs to the GPI family.

The protein resides in the cytoplasm. The catalysed reaction is alpha-D-glucose 6-phosphate = beta-D-fructose 6-phosphate. It functions in the pathway carbohydrate biosynthesis; gluconeogenesis. It participates in carbohydrate degradation; glycolysis; D-glyceraldehyde 3-phosphate and glycerone phosphate from D-glucose: step 2/4. Its function is as follows. Catalyzes the reversible isomerization of glucose-6-phosphate to fructose-6-phosphate. In Leptospira interrogans serogroup Icterohaemorrhagiae serovar Lai (strain 56601), this protein is Glucose-6-phosphate isomerase.